We begin with the raw amino-acid sequence, 243 residues long: UPF0173 metal-dependent hydrolase Xaut_3786 (243 aa).

The protein belongs to the UPF0173 family.

The protein is UPF0173 metal-dependent hydrolase Xaut_3786 of Xanthobacter autotrophicus (strain ATCC BAA-1158 / Py2).